Here is a 127-residue protein sequence, read N- to C-terminus: Major sperm protein 10/36/56/76 (127 aa).

A2 carries the N-acetylalanine modification. In terms of domain architecture, MSP spans 9–126 (DIQTQPNAKI…RRKNLPIEYN (118 aa)).

In terms of tissue distribution, sperm.

The protein resides in the cell projection. The protein localises to the pseudopodium. It localises to the cytoplasm. Its subcellular location is the cytoskeleton. Central component in molecular interactions underlying sperm crawling. Forms an extensive filament system that extends from sperm villipoda, along the leading edge of the pseudopod. In Caenorhabditis elegans, this protein is Major sperm protein 10/36/56/76 (msp-10).